The chain runs to 1088 residues: Insulin receptor substrate 1-B (1088 aa).

The 103-residue stretch at 15–117 folds into the PH domain; sequence DVRKVGYLRK…WYQALVDLHN (103 aa). Phosphotyrosine is present on Y48. The IRS-type PTB domain occupies 155 to 259; it reads FKEVWQVIMK…EAMKALSDEF (105 aa). The segment at 259–428 is disordered; sequence FRPRSKSQSS…GGFISSDEYG (170 aa). Low complexity-rich tracts occupy residues 264–278, 302–312, 379–400, and 408–420; these read KSQSSSNCSNPISVP, SATATSPAGGA, SPSATSPVSLSSSSTSGHGSTS, and SSASISGSPSDGG. Position 307 is a phosphoserine (S307). Position 460 is a phosphotyrosine; by INSR (Y460). A YXXM motif 1 motif is present at residues 460-463; sequence YICM. Polar residues-rich tracts occupy residues 466–479 and 499–516; these read SSSHLQRGPQQRYQ and SSGTSPPTVSHQKTPSQS. Disordered stretches follow at residues 466 to 485 and 496 to 516; these read SSSHLQRGPQQRYQPSRGEE and RTHSSGTSPPTVSHQKTPSQS. 5 short sequence motifs (YXXM motif) span residues 521–524, 567–570, 584–587, 612–615, and 654–657; these read YTEM, YMPM, YMMM, and YINM. Y567 and Y584 each carry phosphotyrosine; by INSR. Phosphotyrosine is present on Y612. Positions 704 to 785 are disordered; sequence NLRISANSGH…PPEPKSPGEY (82 aa). The span at 707-718 shows a compositional bias: polar residues; sequence ISANSGHNLYTE. Positions 719–729 are enriched in low complexity; the sequence is DSSSSSTSSDS. Y785 and Y823 each carry phosphotyrosine; by INSR. The tract at residues 785–787 is GRB2-binding; that stretch reads YVN. Residues 823-826 carry the YXXM motif 7 motif; the sequence is YMNM. Positions 840–863 are enriched in polar residues; sequence TSSYEPPNKPVNSVCPTETCSSSR. The interval 840-868 is disordered; sequence TSSYEPPNKPVNSVCPTETCSSSRPPIRG. Residue Y875 is modified to Phosphotyrosine; by INSR. 2 consecutive short sequence motifs (YXXM motif) follow at residues 875 to 878 and 909 to 912; these read YMSM and YAEM. Residues 935–1006 form a disordered region; the sequence is ASRSSLLGQG…SGEDVKRHSS (72 aa). Composition is skewed to polar residues over residues 946–961 and 980–995; these read GPSAFTRVSLSPNRNP and ETFSSTPTTARVTTGP. Residues Y1037 and Y1069 each carry the phosphotyrosine; by INSR modification.

In terms of assembly, interacts with the NPXY motif of tyrosine-phosphorylated igf1r and insr via the PTB domain. Binds to phosphatidylinositol 3-kinase p85 subunit at a low level in vitro prior to phosphorylation. Binding is greatly enhanced following tyrosine phosphorylation by insr and probably occurs via the phosphorylated YXXM motifs. Phosphorylation of Tyr-785 is required for grb2-binding.

Functionally, may mediate the control of various cellular processes by insulin. When phosphorylated by the insulin receptor binds specifically to various cellular proteins containing SH2 domains such as phosphatidylinositol 3-kinase p85 subunit or grb2. Activates phosphatidylinositol 3-kinase when bound to the regulatory p85 subunit. This chain is Insulin receptor substrate 1-B (irs1-b), found in Xenopus laevis (African clawed frog).